The following is a 50-amino-acid chain: MGKKSKAKKKRLGKLEKQNSRVPAWVMLKTNMEVTRNPKRRNWRRSDTDE.

Over residues Met-1–Leu-12 the composition is skewed to basic residues. The tract at residues Met-1–Arg-21 is disordered.

The protein belongs to the eukaryotic ribosomal protein eL39 family.

The protein is Large ribosomal subunit protein eL39 of Haloquadratum walsbyi (strain DSM 16790 / HBSQ001).